Here is a 380-residue protein sequence, read N- to C-terminus: uncharacterized protein (380 aa).

The N-terminal stretch at 1–28 is a signal peptide; it reads MQFLSDTQRMVLSRAVCASFFFFHVAVA. Positions 307-380 constitute an SPOR domain; sequence AGDEKPRGYQ…DAGYETFPLF (74 aa).

This is an uncharacterized protein from Treponema pallidum (strain Nichols).